We begin with the raw amino-acid sequence, 499 residues long: Lanosterol 14-alpha demethylase (499 aa).

The helical transmembrane segment at Ser13–Gly35 threads the bilayer. Cys441 is a binding site for heme.

The protein belongs to the cytochrome P450 family. The cofactor is heme. Strongly expressed in intestine. Moderately expressed in liver, with higher levels in females compared to males. Also detected at low levels in brain, eye, kidney and testis.

It localises to the endoplasmic reticulum membrane. Its subcellular location is the membrane. The enzyme catalyses a 14alpha-methyl steroid + 3 reduced [NADPH--hemoprotein reductase] + 3 O2 = a Delta(14) steroid + formate + 3 oxidized [NADPH--hemoprotein reductase] + 4 H2O + 4 H(+). It catalyses the reaction lanosterol + 3 reduced [NADPH--hemoprotein reductase] + 3 O2 = 4,4-dimethyl-5alpha-cholesta-8,14,24-trien-3beta-ol + formate + 3 oxidized [NADPH--hemoprotein reductase] + 4 H2O + 4 H(+). It carries out the reaction 24,25-dihydrolanosterol + 3 reduced [NADPH--hemoprotein reductase] + 3 O2 = 4,4-dimethyl-8,14-cholestadien-3beta-ol + formate + 3 oxidized [NADPH--hemoprotein reductase] + 4 H2O + 4 H(+). The catalysed reaction is a 14alpha-methyl steroid + reduced [NADPH--hemoprotein reductase] + O2 = a 14alpha-hydroxymethyl steroid + oxidized [NADPH--hemoprotein reductase] + H2O + H(+). The enzyme catalyses a 14alpha-hydroxymethyl steroid + reduced [NADPH--hemoprotein reductase] + O2 = a 14alpha-formyl steroid + oxidized [NADPH--hemoprotein reductase] + 2 H2O + H(+). It catalyses the reaction a 14alpha-formyl steroid + reduced [NADPH--hemoprotein reductase] + O2 = a Delta(14) steroid + formate + oxidized [NADPH--hemoprotein reductase] + H2O + 2 H(+). It carries out the reaction lanosterol + reduced [NADPH--hemoprotein reductase] + O2 = 32-hydroxylanosterol + oxidized [NADPH--hemoprotein reductase] + H2O + H(+). The catalysed reaction is 32-hydroxylanosterol + reduced [NADPH--hemoprotein reductase] + O2 = 32-oxolanosterol + oxidized [NADPH--hemoprotein reductase] + 2 H2O + H(+). The enzyme catalyses 32-oxolanosterol + reduced [NADPH--hemoprotein reductase] + O2 = 4,4-dimethyl-5alpha-cholesta-8,14,24-trien-3beta-ol + formate + oxidized [NADPH--hemoprotein reductase] + H2O + 2 H(+). It catalyses the reaction 24,25-dihydrolanosterol + reduced [NADPH--hemoprotein reductase] + O2 = 32-hydroxy-24,25-dihydrolanosterol + oxidized [NADPH--hemoprotein reductase] + H2O + H(+). It carries out the reaction 32-hydroxy-24,25-dihydrolanosterol + reduced [NADPH--hemoprotein reductase] + O2 = 32-oxo-24,25-dihydrolanosterol + oxidized [NADPH--hemoprotein reductase] + 2 H2O + H(+). The catalysed reaction is 32-oxo-24,25-dihydrolanosterol + reduced [NADPH--hemoprotein reductase] + O2 = 4,4-dimethyl-8,14-cholestadien-3beta-ol + formate + oxidized [NADPH--hemoprotein reductase] + H2O + 2 H(+). It functions in the pathway steroid biosynthesis; zymosterol biosynthesis; zymosterol from lanosterol: step 1/6. Inhibited by ketoconazole. May also be inhibited to a lesser extent by propiconazole. Functionally, sterol 14alpha-demethylase that plays a critical role in the cholesterol biosynthesis pathway, being cholesterol the major sterol component in deuterostome membranes as well as a precursor for steroid hormone synthesis. Cytochrome P450 monooxygenase that catalyzes the three-step oxidative removal of the 14alpha-methyl group (C-32) of sterols such as lanosterol (lanosta-8,24-dien-3beta-ol) and 24,25-dihydrolanosterol (DHL) in the form of formate, and converts the sterols to 4,4-dimethyl-5alpha-cholesta-8,14,24-trien-3beta-ol and 4,4-dimethyl-8,14-cholestadien-3beta-ol, respectively, which are intermediates of cholesterol biosynthesis. Can also demethylate substrates not intrinsic to deuterostomes, such as eburicol (24-methylene-24,25-dihydrolanosterol), but at a lower rate than DHL. The chain is Lanosterol 14-alpha demethylase from Danio rerio (Zebrafish).